The chain runs to 298 residues: 33 kDa chaperonin (298 aa).

Disulfide bonds link Cys237–Cys239 and Cys270–Cys273.

Belongs to the HSP33 family. In terms of processing, under oxidizing conditions two disulfide bonds are formed involving the reactive cysteines. Under reducing conditions zinc is bound to the reactive cysteines and the protein is inactive.

The protein resides in the cytoplasm. Its function is as follows. Redox regulated molecular chaperone. Protects both thermally unfolding and oxidatively damaged proteins from irreversible aggregation. Plays an important role in the bacterial defense system toward oxidative stress. The protein is 33 kDa chaperonin of Enterococcus faecalis (strain ATCC 700802 / V583).